We begin with the raw amino-acid sequence, 1008 residues long: Translation initiation factor IF-2 (1008 aa).

3 disordered regions span residues 113–136 (AVTA…KGNV), 153–235 (DKDS…PAAP), and 253–405 (GLTV…YRKD). 2 stretches are compositionally biased toward basic and acidic residues: residues 153 to 180 (DKDS…KAKP) and 189 to 213 (PKPE…KAET). Composition is skewed to low complexity over residues 294 to 329 (GPNK…PRPQ) and 342 to 358 (GGPN…SNGP). The span at 365-381 (ASEKGEVTGKQIQDKIK) shows a compositional bias: basic and acidic residues. Positions 507–677 (DRAPIVTIMG…LLEAEMLELK (171 aa)) constitute a tr-type G domain. Positions 516–523 (GHVDHGKT) are G1. A GTP-binding site is contributed by 516–523 (GHVDHGKT). A G2 region spans residues 541 to 545 (GITQH). The G3 stretch occupies residues 563-566 (DTPG). GTP contacts are provided by residues 563 to 567 (DTPGH) and 617 to 620 (NKID). The tract at residues 617 to 620 (NKID) is G4. Residues 653–655 (SAK) are G5.

The protein belongs to the TRAFAC class translation factor GTPase superfamily. Classic translation factor GTPase family. IF-2 subfamily.

It localises to the cytoplasm. Functionally, one of the essential components for the initiation of protein synthesis. Protects formylmethionyl-tRNA from spontaneous hydrolysis and promotes its binding to the 30S ribosomal subunits. Also involved in the hydrolysis of GTP during the formation of the 70S ribosomal complex. This is Translation initiation factor IF-2 from Cytophaga hutchinsonii (strain ATCC 33406 / DSM 1761 / CIP 103989 / NBRC 15051 / NCIMB 9469 / D465).